The sequence spans 117 residues: Ribosome-binding factor A (117 aa).

Belongs to the RbfA family. In terms of assembly, monomer. Binds 30S ribosomal subunits, but not 50S ribosomal subunits or 70S ribosomes.

The protein localises to the cytoplasm. Functionally, one of several proteins that assist in the late maturation steps of the functional core of the 30S ribosomal subunit. Associates with free 30S ribosomal subunits (but not with 30S subunits that are part of 70S ribosomes or polysomes). Required for efficient processing of 16S rRNA. May interact with the 5'-terminal helix region of 16S rRNA. The polypeptide is Ribosome-binding factor A (Bacillus licheniformis (strain ATCC 14580 / DSM 13 / JCM 2505 / CCUG 7422 / NBRC 12200 / NCIMB 9375 / NCTC 10341 / NRRL NRS-1264 / Gibson 46)).